A 363-amino-acid chain; its full sequence is 3-isopropylmalate dehydrogenase (363 aa).

NAD(+) is bound at residue 78–91 (GPKWEHLPPDQQPE). Substrate contacts are provided by Arg-99, Arg-109, Arg-138, and Asp-227. Residues Asp-227, Asp-251, and Asp-255 each coordinate Mg(2+). An NAD(+)-binding site is contributed by 285-297 (GSAPDIAGKNIAN).

Belongs to the isocitrate and isopropylmalate dehydrogenases family. LeuB type 1 subfamily. As to quaternary structure, homodimer. Requires Mg(2+) as cofactor. It depends on Mn(2+) as a cofactor.

Its subcellular location is the cytoplasm. It carries out the reaction (2R,3S)-3-isopropylmalate + NAD(+) = 4-methyl-2-oxopentanoate + CO2 + NADH. It participates in amino-acid biosynthesis; L-leucine biosynthesis; L-leucine from 3-methyl-2-oxobutanoate: step 3/4. With respect to regulation, requires K(+) ions for optimum activity. Its function is as follows. Catalyzes the oxidation of 3-carboxy-2-hydroxy-4-methylpentanoate (3-isopropylmalate) to 3-carboxy-4-methyl-2-oxopentanoate. The product decarboxylates to 4-methyl-2 oxopentanoate. In Escherichia coli (strain K12), this protein is 3-isopropylmalate dehydrogenase.